The chain runs to 468 residues: MQLSGILSWLLSWLWASQTTLDLQGLYGPSLSPNAEIVLASDANYTHVTTQRWTVHGAPHYLGAIIPVTEHDIQHIIKISREHAINFLVVGAGHGATVTFERFRHGIAIDLQQFKDVHLDVDAERLTVAGATVFSDIIDPLYSAQREIVTPSAPCVGVVGMTLGGGIGSLQGLHGLLLDSLESVRLVTPIGDLIEVSETQYPELFWGLRGAGSNFGVVTSATYRTHQATHGGLVTNVDIFAATEHASIWQALSAFDDTLPPELALTLAVAYNRTIDQPLVLVNAIYYGPEEQALELLSPFTSLTPIMSRSVTVPWNALLDTTFFGLAAQEGGACAKNQAVNIYSIGLNHTDVPAWESYMEQLLQFYRQNPTYDGRFLVQRYPTQGALSTLDSNTAYPHRQIKMHINLEGWYTDPYLEDPVNAFLKQSRRHFQQSSGFDNLAVYVNYAHGDEGPDVWYTAEKLENLTRL.

Residues 1 to 16 (MQLSGILSWLLSWLWA) form the signal peptide. N44 is a glycosylation site (N-linked (GlcNAc...) asparagine). The region spanning 54–228 (TVHGAPHYLG…TSATYRTHQA (175 aa)) is the FAD-binding PCMH-type domain. Residues N272, N348, and N464 are each glycosylated (N-linked (GlcNAc...) asparagine).

Belongs to the oxygen-dependent FAD-linked oxidoreductase family. FAD serves as cofactor.

It participates in secondary metabolite biosynthesis. FAD-linked oxidoreductase; part of the gene cluster that mediates the biosynthesis of azaphilones, a class of fungal metabolites characterized by a highly oxygenated pyrano-quinone bicyclic core and exhibiting a broad range of bioactivities. In the first step, the non-reducing polyketide synthase azaA forms the hexaketide precursor from successive condensations of five malonyl-CoA units, presumably with a simple acetyl-CoA starter unit. The reactive polyketide chain then undergoes a PT-mediated C2-C7 cyclization to afford the aromatic ring and is eventually released as an aldehyde through the R-domain. The putative ketoreductase azaE is proposed to catalyze the reduction of the terminal ketone resulting in the early culture product FK17-P2a. The monooxygenase azaH was demonstrated to be the only enzyme required to convert FK17-P2a to azanigerone E. AzaH first hydroxylates the benzaldehyde intermediate FK17-P2a at C4, which triggers the formation of the pyran-ring to afford azanigerone E. In parallel, the 2,4-dimethylhexanoyl chain is synthesized by the HR-PKS azaB and is proposed to be transferred to the C4-hydroxyl of azanigerone E by the acyltransferase azaD directly from the ACP domain of azaB. Alternatively, the 2,4-dimethyl-hexanoyl chain may be offloaded from the HR-PKS as a carboxylic acid and converted to an acyl-CoA by azaF. The resulting acyl-CoA molecule could then be taken up as a substrate by AzaD to form azanigerone B. To yield the carboxylic acid substituent in azanigerone A, the hydroxypropyl side chain of azanigerone B would need to undergo a C-C oxidative cleavage catalyzed by cytochrome P450 AzaI. AzaI is proposed to act on a vicinal diol that leads to a C-C bond scission either through an alkoxyradical intermediate or a peroxy complex. In the biosynthesis of azanigerone A, azanigerone B first undergoes hydroxylation at C10, possibly catalyzed by one of the two FAD-dependent monooxygenases encoded in the cluster, azaG or azaL, resulting in the vicinal diol azanigerone C. Oxidative cleavage of azanigerone C by azaI would yield the corresponding aldehyde derivative of azanigerone A. Finally, the dehydrogenase azaJ is proposed to convert the aldehyde functional group into the carboxylic acid, completing the conversion from azanigerone B to azanigerone A. Alternatively, the oxidation of aldehyde to carboxylic acid may be catalyzed by the same P450 enzyme azaI via consecutive oxidation or by endogenous alcohol dehydrogenase. In Aspergillus niger (strain ATCC 1015 / CBS 113.46 / FGSC A1144 / LSHB Ac4 / NCTC 3858a / NRRL 328 / USDA 3528.7), this protein is FAD-linked oxidoreductase azaG.